Here is a 73-residue protein sequence, read N- to C-terminus: uncharacterized protein (73 aa).

Residues 20–49 (NATYNKNLELEKRLAKIRNEIPNKSKLIAT) adopt a coiled-coil conformation.

This is an uncharacterized protein from Acheta domesticus (House cricket).